Reading from the N-terminus, the 271-residue chain is Urease accessory protein UreD (271 aa).

This sequence belongs to the UreD family. As to quaternary structure, ureD, UreF and UreG form a complex that acts as a GTP-hydrolysis-dependent molecular chaperone, activating the urease apoprotein by helping to assemble the nickel containing metallocenter of UreC. The UreE protein probably delivers the nickel.

The protein localises to the cytoplasm. Functionally, required for maturation of urease via the functional incorporation of the urease nickel metallocenter. The sequence is that of Urease accessory protein UreD from Actinomyces naeslundii.